The sequence spans 62 residues: Snaclec aspercetin subunit beta (62 aa).

Residues Cys-2 and Cys-13 are joined by a disulfide bond. Residues 9-62 (YEGHCYRVFKPPKDWADAERFCSQQAKGGHLVSIERFGREDFVSNLITKNLQRG) form the C-type lectin domain.

This sequence belongs to the snaclec family. As to quaternary structure, heterodimer; disulfide-linked. As to expression, expressed by the venom gland.

Its subcellular location is the secreted. In terms of biological role, snaclec that binds to von Willebrand factor (VWF) and induces its interaction with GPIbalpha (GP1BA) (via the vWF A1 domain), resulting in platelet aggregation. Intramuscular and intravenous injections in mice induce a dose-dependent drop in platelet count (thrombocytopenia). Pretreatment by intravenous injection by this protein in mice potentiates the hemorrhagic lesion in the skin provoked by the metalloproteinase BaP1 intradermally injected. This result is not observed when both BaP1 and this protein are injected simultaneously. The protein is Snaclec aspercetin subunit beta of Bothrops asper (Terciopelo).